The primary structure comprises 221 residues: uncharacterized protein (221 aa).

It is found in the mitochondrion. This is an uncharacterized protein from Paramecium tetraurelia.